A 246-amino-acid polypeptide reads, in one-letter code: tRNA (guanine-N(7)-)-methyltransferase (246 aa).

Positions 77, 102, 129, and 152 each coordinate S-adenosyl-L-methionine. Asp152 is a catalytic residue. Residues Lys156, Asp188, and 225-228 (TKFE) contribute to the substrate site.

It belongs to the class I-like SAM-binding methyltransferase superfamily. TrmB family.

It carries out the reaction guanosine(46) in tRNA + S-adenosyl-L-methionine = N(7)-methylguanosine(46) in tRNA + S-adenosyl-L-homocysteine. It functions in the pathway tRNA modification; N(7)-methylguanine-tRNA biosynthesis. Functionally, catalyzes the formation of N(7)-methylguanine at position 46 (m7G46) in tRNA. This Haemophilus influenzae (strain 86-028NP) protein is tRNA (guanine-N(7)-)-methyltransferase.